The chain runs to 508 residues: Photosystem II CP47 reaction center protein (508 aa).

6 consecutive transmembrane segments (helical) span residues serine 21–serine 36, isoleucine 101–tryptophan 115, glycine 140–phenylalanine 156, isoleucine 203–serine 218, valine 237–valine 252, and serine 457–arginine 472.

It belongs to the PsbB/PsbC family. PsbB subfamily. In terms of assembly, PSII is composed of 1 copy each of membrane proteins PsbA, PsbB, PsbC, PsbD, PsbE, PsbF, PsbH, PsbI, PsbJ, PsbK, PsbL, PsbM, PsbT, PsbX, PsbY, PsbZ, Psb30/Ycf12, at least 3 peripheral proteins of the oxygen-evolving complex and a large number of cofactors. It forms dimeric complexes. Binds multiple chlorophylls. PSII binds additional chlorophylls, carotenoids and specific lipids. serves as cofactor.

It localises to the plastid. The protein localises to the chloroplast thylakoid membrane. One of the components of the core complex of photosystem II (PSII). It binds chlorophyll and helps catalyze the primary light-induced photochemical processes of PSII. PSII is a light-driven water:plastoquinone oxidoreductase, using light energy to abstract electrons from H(2)O, generating O(2) and a proton gradient subsequently used for ATP formation. This chain is Photosystem II CP47 reaction center protein, found in Nuphar advena (Common spatterdock).